The following is a 456-amino-acid chain: Tyrosinase-like protein (456 aa).

An N-terminal signal peptide occupies residues 1–22 (MNTMTLLGKVFLLQFLIGVGFC). The Cu cation site is built by His145, His154, His163, His295, His299, and His322.

The protein belongs to the tyrosinase family. Requires Cu(2+) as cofactor. In terms of tissue distribution, prismatic layer of shell (at protein level).

It is found in the secreted. The protein is Tyrosinase-like protein of Pinctada maxima (Silver-lipped pearl oyster).